Here is a 592-residue protein sequence, read N- to C-terminus: Signal peptide peptidase-like 2B (592 aa).

A signal peptide spans 1 to 25 (MAAAVAAALARLLAAFLLLAAQVAC). Topologically, residues 26 to 174 (EYGMVHVVSQ…APKEPVLDYN (149 aa)) are lumenal. In terms of domain architecture, PA spans 71-149 (TASLLCSAAD…VALLSYKDML (79 aa)). N-linked (GlcNAc...) asparagine glycosylation is found at asparagine 97 and asparagine 129. Residues 175-195 (MVIIFIMAVGTVAIGGYWAGS) form a helical membrane-spanning segment. Over 196-221 (RDVKKRYMKHKRDDGPEKQEDEAVDV) the chain is Cytoplasmic. The helical transmembrane segment at 222–244 (TPVMTCVFVVMCCSMLVLLYYFY) threads the bilayer. Over 245–248 (DLLV) the chain is Lumenal. A helical membrane pass occupies residues 249–271 (YVVIGIFCLASATGLYSCLAPCV). At 272–293 (RRLPFGKCRIPNNSLPYFHKRP) the chain is on the cytoplasmic side. A helical transmembrane segment spans residues 294–314 (QARMLLLALFCVAVSVVWGVF). The Lumenal segment spans residues 315 to 319 (RNEDQ). The helical transmembrane segment at 320–340 (WAWVLQDALGIAFCLYMLKTI) threads the bilayer. The Cytoplasmic segment spans residues 341–348 (RLPTFKAC). Residues 349-369 (TLLLLVLFLYDIFFVFITPFL) form a helical membrane-spanning segment. The active site involves aspartate 359. Over 370–412 (TKSGSSIMVEVATGPSDSATREKLPMVLKVPRLNSSPLALCDR) the chain is Lumenal. Residues 413–433 (PFSLLGFGDILVPGLLVAYCH) form a helical membrane-spanning segment. The active site involves aspartate 421. Residues 434–445 (RFDIQVQSSRVY) are Cytoplasmic-facing. A helical membrane pass occupies residues 446-466 (FVACTIAYGVGLLVTFVALAL). Topologically, residues 467 to 470 (MQRG) are lumenal. A helical membrane pass occupies residues 471-491 (QPALLYLVPCTLVTSCAVALW). Positions 472–474 (PAL) match the PAL motif. Topologically, residues 492 to 592 (RRELGVFWTG…SPVTQPGASA (101 aa)) are cytoplasmic. Residues 512–524 (PWAPAPADGPQPP) are compositionally biased toward pro residues. Positions 512-592 (PWAPAPADGP…SPVTQPGASA (81 aa)) are disordered. Residues 580-592 (AQPSPVTQPGASA) show a composition bias toward polar residues.

This sequence belongs to the peptidase A22B family. Monomer. Homodimer. Interacts with ITM2B. Interacts with TNF. Interacts with the simian foamy virus envelope glycoprotein gp130 and its processed leader peptide gp18LP; preferentially interacts with the leader peptide gp18LP. Glycosylated. As to expression, expressed predominantly in adrenal cortex and mammary gland.

The protein resides in the cell membrane. The protein localises to the golgi apparatus membrane. It localises to the lysosome membrane. It is found in the endosome membrane. Its subcellular location is the membrane. Intramembrane-cleaving aspartic protease (I-CLiP) that cleaves type II membrane signal peptides in the hydrophobic plane of the membrane. Functions in ITM2B and TNF processing. Catalyzes the intramembrane cleavage of the anchored fragment of shed TNF-alpha (TNF), which promotes the release of the intracellular domain (ICD) for signaling to the nucleus. May play a role in the regulation of innate and adaptive immunity. Catalyzes the intramembrane cleavage of the simian foamy virus processed leader peptide gp18 of the envelope glycoprotein gp130 dependently of prior ectodomain shedding by furin or furin-like proprotein convertase (PC)-mediated cleavage proteolysis. The protein is Signal peptide peptidase-like 2B of Homo sapiens (Human).